The chain runs to 211 residues: MSGTLVLVRHGQSEWNLKNLFTGWRDPDLTELGVEEAKAGGAALAEYGIKFDIAFTSVLVRAQRTCQMVLDAVGQSSLETICDQALNERDYGDLSGLNKDDARAKWGEEQVHIWRRSYDVPPPGGESLRDTGARVWPYYLTEILPRVLAGEKVLVAAHGNSLRSLVMVLDRLTKEQVLNLNLATGVPMVYKLKADSTVASKEVLGDMSAAH.

Substrate-binding positions include R9–N16, T22–G23, R61, E88–Y91, K99, R115–R116, and G159–N160. H10 (tele-phosphohistidine intermediate) is an active-site residue. The active-site Proton donor/acceptor is the E88.

Belongs to the phosphoglycerate mutase family. BPG-dependent PGAM subfamily. Homodimer.

The enzyme catalyses (2R)-2-phosphoglycerate = (2R)-3-phosphoglycerate. It functions in the pathway carbohydrate degradation; glycolysis; pyruvate from D-glyceraldehyde 3-phosphate: step 3/5. Functionally, catalyzes the interconversion of 2-phosphoglycerate and 3-phosphoglycerate. The sequence is that of 2,3-bisphosphoglycerate-dependent phosphoglycerate mutase from Sinorhizobium fredii (strain NBRC 101917 / NGR234).